Reading from the N-terminus, the 477-residue chain is Secreted RxLR effector protein 102 (477 aa).

A signal peptide spans 1-20 (MRGGYYVLTALFVVASSEIA). The RxLR-dEER signature appears at 48-65 (RFLRESRGVHGNVANEER). Disordered stretches follow at residues 326–345 (SKGQIPYPSEPLNAASTSKG), 351–370 (IKRSKRTSDGNTDIASLPSI), 376–401 (SSKSVMPLLTESTTSGDHSVPAKRSR), and 433–455 (PRSAVDPYTQSKKHSTKALAPSS).

The protein belongs to the RxLR effector family.

It localises to the secreted. Its subcellular location is the host nucleus. Secreted effector that acts as an elicitor that induces cell death in host plant cells. The sequence is that of Secreted RxLR effector protein 102 from Plasmopara viticola (Downy mildew of grapevine).